A 353-amino-acid chain; its full sequence is Photosystem II protein D1 (353 aa).

N-acetylthreonine is present on T2. Residue T2 is modified to Phosphothreonine. A run of 3 helical transmembrane segments spans residues 29–46 (YIGWFGVLMIPTLLTATS), 118–133 (HFLLGVACYMGREWEL), and 142–156 (WIAVAYSAPVAAATA). Residue H118 participates in chlorophyll a binding. Y126 contributes to the pheophytin a binding site. The [CaMn4O5] cluster site is built by D170 and E189. The helical transmembrane segment at 197 to 218 (FHMLGVAGVFGGSLFSAMHGSL) threads the bilayer. H198 serves as a coordination point for chlorophyll a. A quinone-binding positions include H215 and 264–265 (SF). H215 lines the Fe cation pocket. H272 serves as a coordination point for Fe cation. Residues 274–288 (FLAAWPVVGIWFTAL) form a helical membrane-spanning segment. [CaMn4O5] cluster is bound by residues H332, E333, D342, and A344. A propeptide spanning residues 345-353 (AIEAPSTNG) is cleaved from the precursor.

The protein belongs to the reaction center PufL/M/PsbA/D family. PSII is composed of 1 copy each of membrane proteins PsbA, PsbB, PsbC, PsbD, PsbE, PsbF, PsbH, PsbI, PsbJ, PsbK, PsbL, PsbM, PsbT, PsbX, PsbY, PsbZ, Psb30/Ycf12, at least 3 peripheral proteins of the oxygen-evolving complex and a large number of cofactors. It forms dimeric complexes. The D1/D2 heterodimer binds P680, chlorophylls that are the primary electron donor of PSII, and subsequent electron acceptors. It shares a non-heme iron and each subunit binds pheophytin, quinone, additional chlorophylls, carotenoids and lipids. D1 provides most of the ligands for the Mn4-Ca-O5 cluster of the oxygen-evolving complex (OEC). There is also a Cl(-1) ion associated with D1 and D2, which is required for oxygen evolution. The PSII complex binds additional chlorophylls, carotenoids and specific lipids. is required as a cofactor. Post-translationally, tyr-161 forms a radical intermediate that is referred to as redox-active TyrZ, YZ or Y-Z. In terms of processing, C-terminally processed by CTPA; processing is essential to allow assembly of the oxygen-evolving complex and thus photosynthetic growth.

Its subcellular location is the plastid. It is found in the chloroplast thylakoid membrane. It carries out the reaction 2 a plastoquinone + 4 hnu + 2 H2O = 2 a plastoquinol + O2. Its function is as follows. Photosystem II (PSII) is a light-driven water:plastoquinone oxidoreductase that uses light energy to abstract electrons from H(2)O, generating O(2) and a proton gradient subsequently used for ATP formation. It consists of a core antenna complex that captures photons, and an electron transfer chain that converts photonic excitation into a charge separation. The D1/D2 (PsbA/PsbD) reaction center heterodimer binds P680, the primary electron donor of PSII as well as several subsequent electron acceptors. This chain is Photosystem II protein D1, found in Gossypium barbadense (Sea Island cotton).